The chain runs to 345 residues: MEFSKLIEILNNGDSGLIDHNLSSNPEINSAASLEKAEVNQISFIENASYLFNEINQTKASALILGEKVDITEKLDLKNIAWVTVKNPRIAFAEILEEINPTKVFPESIHPSAVIGNNVKIGKNIYIGANVCIDSNTRIGDNSIIHSGVVIYENVVIGKNNELHANCVIHQYSNLGDNCIINSNAVIGSEGFGFIPTKRGWRKMPQTGKVILGDNVEIGSCSTVDRPAVGDTVIGSGTKIDNLVQVGHGVQIGNHCAMASQVGIAGGAKIGDGVILAGQVGVGNRVKVGSNVIASSKCGIHTDIEPEQVVSGFPAIPNKLWLRCAANFKKLPELAKVIKKLNGSV.

The active-site Proton acceptor is His248.

The protein belongs to the transferase hexapeptide repeat family. LpxD subfamily. As to quaternary structure, homotrimer.

It catalyses the reaction a UDP-3-O-[(3R)-3-hydroxyacyl]-alpha-D-glucosamine + a (3R)-hydroxyacyl-[ACP] = a UDP-2-N,3-O-bis[(3R)-3-hydroxyacyl]-alpha-D-glucosamine + holo-[ACP] + H(+). Its pathway is bacterial outer membrane biogenesis; LPS lipid A biosynthesis. Its function is as follows. Catalyzes the N-acylation of UDP-3-O-acylglucosamine using 3-hydroxyacyl-ACP as the acyl donor. Is involved in the biosynthesis of lipid A, a phosphorylated glycolipid that anchors the lipopolysaccharide to the outer membrane of the cell. The sequence is that of UDP-3-O-acylglucosamine N-acyltransferase from Prochlorococcus marinus (strain SARG / CCMP1375 / SS120).